The primary structure comprises 317 residues: Glutathione synthetase (317 aa).

The ATP-grasp domain maps to 124 to 310; that stretch reads EKLFTAWFPE…ITGKLMDAIE (187 aa). 150 to 207 serves as a coordination point for ATP; that stretch reads FRQEHGDIILKPLDGMGGASIFRVKENDPNVSVIIETLTNHGQNYAMAQTFVPDISNG. Residues E281 and N283 each coordinate Mg(2+).

The protein belongs to the prokaryotic GSH synthase family. Mg(2+) is required as a cofactor. Requires Mn(2+) as cofactor.

The catalysed reaction is gamma-L-glutamyl-L-cysteine + glycine + ATP = glutathione + ADP + phosphate + H(+). Its pathway is sulfur metabolism; glutathione biosynthesis; glutathione from L-cysteine and L-glutamate: step 2/2. The polypeptide is Glutathione synthetase (Vibrio vulnificus (strain CMCP6)).